The chain runs to 769 residues: Probable protease Ga0334635_1659 (769 aa).

Positions 118–167 (VARGSSDNNGAPPLSFTLSHGDPKSDPEPSSPSRLVNTGLSEAERPESPL) are disordered.

Probably a dedicated protease for substrate gasdermin bGSDM; cleaves the bGSDM precursor, releasing the pore-forming moiety, which integrates into the membrane and triggers cell death. Involved in defense against bacteriophages. Expression of gasdermin bGSDM and this neighboring protease is toxic in E.coli. The polypeptide is Probable protease Ga0334635_1659 (Vitiosangium sp. (strain GDMCC 1.1324)).